Consider the following 408-residue polypeptide: LL-diaminopimelate aminotransferase (408 aa).

The substrate site is built by Tyr15 and Gly42. Residues Tyr72, Ser108–Lys109, Tyr132, Asn187, Tyr218, and Ser246–Ser248 contribute to the pyridoxal 5'-phosphate site. Substrate contacts are provided by Lys109, Tyr132, and Asn187. At Lys249 the chain carries N6-(pyridoxal phosphate)lysine. Residues Arg257 and Asn292 each contribute to the pyridoxal 5'-phosphate site. The substrate site is built by Asn292 and Arg388.

This sequence belongs to the class-I pyridoxal-phosphate-dependent aminotransferase family. LL-diaminopimelate aminotransferase subfamily. Homodimer. The cofactor is pyridoxal 5'-phosphate.

It carries out the reaction (2S,6S)-2,6-diaminopimelate + 2-oxoglutarate = (S)-2,3,4,5-tetrahydrodipicolinate + L-glutamate + H2O + H(+). The protein operates within amino-acid biosynthesis; L-lysine biosynthesis via DAP pathway; LL-2,6-diaminopimelate from (S)-tetrahydrodipicolinate (aminotransferase route): step 1/1. Involved in the synthesis of meso-diaminopimelate (m-DAP or DL-DAP), required for both lysine and peptidoglycan biosynthesis. Catalyzes the direct conversion of tetrahydrodipicolinate to LL-diaminopimelate. The sequence is that of LL-diaminopimelate aminotransferase from Synechococcus sp. (strain RCC307).